The following is a 221-amino-acid chain: Small ribosomal subunit protein uS5 (221 aa).

The S5 DRBM domain maps to 46 to 109 (IKDEVIDIKR…INAKLNIMEI (64 aa)).

Belongs to the universal ribosomal protein uS5 family. As to quaternary structure, part of the 30S ribosomal subunit. Contacts protein S4.

With S4 and S12 plays an important role in translational accuracy. This is Small ribosomal subunit protein uS5 from Thermoplasma volcanium (strain ATCC 51530 / DSM 4299 / JCM 9571 / NBRC 15438 / GSS1).